The sequence spans 252 residues: MHAEFRTDRGRIRHHNEDNGGVFENKDNQPIVIVADGMGGHRAGDVASEMAVRLLSDAWKETTALLTAEEIETWLQKTIQEVNKEIVLYSESEMDLNGMGTTLVAAIMAQSQVVIANVGDSRGYLLQNHVLRQLTEDHSLVHELLRTGEISKEDAMNHPRKNILLRALGVEGKVEVDTFVVPFQTSDTLLLCSDGLTNMVPETEMEEILKSKRTLSEKADVFITKANSYGGEDNITVLLVERDLTQKGRDAS.

Basic and acidic residues predominate over residues 1 to 18; the sequence is MHAEFRTDRGRIRHHNED. The interval 1 to 23 is disordered; it reads MHAEFRTDRGRIRHHNEDNGGVF. The 241-residue stretch at 2 to 242 folds into the PPM-type phosphatase domain; sequence HAEFRTDRGR…DNITVLLVER (241 aa). 4 residues coordinate Mn(2+): Asp-36, Gly-37, Asp-194, and Asp-233.

The protein belongs to the PP2C family. Mn(2+) serves as cofactor.

It localises to the cytoplasm. It is found in the membrane. It catalyses the reaction O-phospho-L-seryl-[protein] + H2O = L-seryl-[protein] + phosphate. The enzyme catalyses O-phospho-L-threonyl-[protein] + H2O = L-threonyl-[protein] + phosphate. Functionally, protein phosphatase that dephosphorylates EF-Tu. The polypeptide is Serine/threonine phosphatase stp (stp) (Listeria monocytogenes serotype 4b (strain F2365)).